A 273-amino-acid polypeptide reads, in one-letter code: Glutamate racemase (273 aa).

Residues 19 to 20 and 51 to 52 contribute to the substrate site; these read DS and YG. The active-site Proton donor/acceptor is cysteine 83. 84–85 serves as a coordination point for substrate; the sequence is NT. The active-site Proton donor/acceptor is cysteine 198. 199 to 200 contacts substrate; sequence TH.

This sequence belongs to the aspartate/glutamate racemases family.

The catalysed reaction is L-glutamate = D-glutamate. The protein operates within cell wall biogenesis; peptidoglycan biosynthesis. Its function is as follows. Provides the (R)-glutamate required for cell wall biosynthesis. The sequence is that of Glutamate racemase from Agrobacterium fabrum (strain C58 / ATCC 33970) (Agrobacterium tumefaciens (strain C58)).